The sequence spans 152 residues: Transcriptional regulator MraZ (152 aa).

2 consecutive SpoVT-AbrB domains span residues 5–52 and 81–124; these read VNQL…PLPE and AQEL…DESL.

This sequence belongs to the MraZ family. Forms oligomers.

It is found in the cytoplasm. The protein localises to the nucleoid. The chain is Transcriptional regulator MraZ from Halorhodospira halophila (strain DSM 244 / SL1) (Ectothiorhodospira halophila (strain DSM 244 / SL1)).